We begin with the raw amino-acid sequence, 157 residues long: uncharacterized protein (157 aa).

This is an uncharacterized protein from Lepidoptera (butterflies and moths).